We begin with the raw amino-acid sequence, 230 residues long: SPbeta prophage-derived putative HNH endonuclease YoqL (230 aa).

In terms of domain architecture, HNH spans 136–188; sequence CSYCGLKIEDHKILFKGTYIQSDFHKEHVDHKGANDISNCIPACKSCNSSKHD.

This sequence belongs to the HNH nuclease family.

The chain is SPbeta prophage-derived putative HNH endonuclease YoqL (yoqL) from Bacillus subtilis (strain 168).